Consider the following 160-residue polypeptide: 2-C-methyl-D-erythritol 2,4-cyclodiphosphate synthase (160 aa).

The a divalent metal cation site is built by Asp-9 and His-11. Residues 9–11 and 35–36 each bind 4-CDP-2-C-methyl-D-erythritol 2-phosphate; these read DVH and HS. His-43 is a binding site for a divalent metal cation. Residues 57-59, 62-66, 101-107, 133-136, Phe-140, and Arg-143 each bind 4-CDP-2-C-methyl-D-erythritol 2-phosphate; these read DIG, FPDTD, AEAPKMA, and TTSE.

This sequence belongs to the IspF family. In terms of assembly, homotrimer. A divalent metal cation is required as a cofactor.

It carries out the reaction 4-CDP-2-C-methyl-D-erythritol 2-phosphate = 2-C-methyl-D-erythritol 2,4-cyclic diphosphate + CMP. Its pathway is isoprenoid biosynthesis; isopentenyl diphosphate biosynthesis via DXP pathway; isopentenyl diphosphate from 1-deoxy-D-xylulose 5-phosphate: step 4/6. In terms of biological role, involved in the biosynthesis of isopentenyl diphosphate (IPP) and dimethylallyl diphosphate (DMAPP), two major building blocks of isoprenoid compounds. Catalyzes the conversion of 4-diphosphocytidyl-2-C-methyl-D-erythritol 2-phosphate (CDP-ME2P) to 2-C-methyl-D-erythritol 2,4-cyclodiphosphate (ME-CPP) with a corresponding release of cytidine 5-monophosphate (CMP). This Methylobacillus flagellatus (strain ATCC 51484 / DSM 6875 / VKM B-1610 / KT) protein is 2-C-methyl-D-erythritol 2,4-cyclodiphosphate synthase.